The chain runs to 220 residues: Aklanonic acid methyltransferase DauC (220 aa).

It belongs to the methyltransferase superfamily. DnrC family. Homodimer.

The catalysed reaction is aklanonate + S-adenosyl-L-methionine = methyl aklanonate + S-adenosyl-L-homocysteine. The protein operates within antibiotic biosynthesis; daunorubicin biosynthesis. It functions in the pathway antibiotic biosynthesis; carminomycin biosynthesis. It participates in antibiotic biosynthesis; rhodomycin biosynthesis. Its pathway is antibiotic biosynthesis; aclacinomycin biosynthesis. Functionally, involved in the biosynthesis of aklavinone which is an important precursor common to the formation of the clinically significant anthracyclines such as carminomycin, daunorubicin (daunomycin), rhodomycin, aclacinomycin T (aklavin) and aclacinomycin A (aclarubicin). These compounds are aromatic polyketide antibiotics that exhibit high cytotoxicity and are widely applied in the chemotherapy of a variety of cancers. Catalyzes the methyl esterification of aklanonic acid to yield aklanonic acid methyl ester. This chain is Aklanonic acid methyltransferase DauC (dauC), found in Streptomyces sp. (strain C5).